A 172-amino-acid polypeptide reads, in one-letter code: Alpha-crystallin A chain (172 aa).

At Met-1 the chain carries N-acetylmethionine. Residues 1–63 are required for complex formation with BFSP1 and BFSP2; that stretch reads MDVTIQHPWF…RTVLDSGISE (63 aa). Deamidated glutamine; partial is present on Gln-6. Ser-45 bears the Phosphoserine mark. Gln-50 carries the post-translational modification Deamidated glutamine; partial. In terms of domain architecture, sHSP spans 52 to 163; that stretch reads LFRTVLDSGI…HERAIPVARE (112 aa). Lys-70 carries the post-translational modification N6-acetyllysine. Gln-90 carries the post-translational modification Deamidated glutamine; partial. At Lys-99 the chain carries N6-acetyllysine. His-100 contacts Zn(2+). Asn-101 bears the Deamidated asparagine; partial mark. Zn(2+)-binding residues include Glu-102 and His-107. Ser-122 carries the phosphoserine modification. A Deamidated asparagine; partial modification is found at Asn-123. Gln-147 is modified (deamidated glutamine; partial). His-154 serves as a coordination point for Zn(2+). O-linked (GlcNAc) serine glycosylation occurs at Ser-168.

This sequence belongs to the small heat shock protein (HSP20) family. As to quaternary structure, heteromer composed of three CRYAA and one CRYAB subunits. Inter-subunit bridging via zinc ions enhances stability, which is crucial as there is no protein turn over in the lens. Can also form homodimers and homotetramers (dimers of dimers) which serve as the building blocks of homooligomers. Within homooligomers, the zinc-binding motif is created from residues of 3 different molecules. His-100 and Glu-102 from one molecule are ligands of the zinc ion, and His-107 and His-154 residues from additional molecules complete the site with tetrahedral coordination geometry. Part of a complex required for lens intermediate filament formation composed of BFSP1, BFSP2 and CRYAA. Acetylation at Lys-70 may increase chaperone activity. In terms of processing, undergoes age-dependent proteolytical cleavage at the C-terminus.

It is found in the cytoplasm. The protein resides in the nucleus. Contributes to the transparency and refractive index of the lens. Acts as a chaperone, preventing aggregation of various proteins under a wide range of stress conditions. Required for the correct formation of lens intermediate filaments as part of a complex composed of BFSP1, BFSP2 and CRYAA. This chain is Alpha-crystallin A chain (CRYAA), found in Macaca mulatta (Rhesus macaque).